A 210-amino-acid chain; its full sequence is DNA dC-&gt;dU-editing enzyme APOBEC-3H (210 aa).

The CMP/dCMP-type deaminase domain occupies 4-126 (LTAKTFSLQF…PNYQEGLLLL (123 aa)). Residue His54 coordinates Zn(2+). Glu56 serves as the catalytic Proton donor. Zn(2+) contacts are provided by Cys85 and Cys88. Residues 182-210 (SRSVDVLENGLRSLQLGPVTPSSSIRNSR) are necessary and sufficient for localization to the cytoplasm.

The protein belongs to the cytidine and deoxycytidylate deaminase family. In terms of assembly, homodimer. Requires Zn(2+) as cofactor.

It localises to the cytoplasm. It carries out the reaction a 2'-deoxycytidine in single-stranded DNA + H2O + H(+) = a 2'-deoxyuridine in single-stranded DNA + NH4(+). Its activity is regulated as follows. Antiviral activity is neutralized by the simian immunodeficiency virus rhesus (SIV-mac) virion infectivity factor (VIF). In terms of biological role, DNA deaminase (cytidine deaminase) which acts as an inhibitor of retrovirus replication and retrotransposon mobility via deaminase-dependent and -independent mechanisms. Exhibits antiviral activity against vif-deficient HIV-1. After the penetration of retroviral nucleocapsids into target cells of infection and the initiation of reverse transcription, it can induce the conversion of cytosine to uracil in the minus-sense single-strand viral DNA, leading to G-to-A hypermutations in the subsequent plus-strand viral DNA. The resultant detrimental levels of mutations in the proviral genome, along with a deamination-independent mechanism that works prior to the proviral integration, together exert efficient antiretroviral effects in infected target cells. Selectively targets single-stranded DNA and does not deaminate double-stranded DNA or single- or double-stranded RNA. This is DNA dC-&gt;dU-editing enzyme APOBEC-3H from Macaca mulatta (Rhesus macaque).